Here is a 1026-residue protein sequence, read N- to C-terminus: RecBCD enzyme subunit RecB (1026 aa).

The region spanning 1–438 (MSSFDIFSPT…LILDTNYRST (438 aa)) is the UvrD-like helicase ATP-binding domain. The interval 1 to 766 (MSSFDIFSPT…LANYANITQH (766 aa)) is DNA-binding and helicase activity, interacts with RecC. Position 21–28 (21–28 (ASAGTGKT)) interacts with ATP. In terms of domain architecture, UvrD-like helicase C-terminal spans 452–700 (PSPFLETPQT…KITTVHSSKG (249 aa)). The nuclease activity, interacts with RecD and RecA stretch occupies residues 815 to 1026 (SQPIYSFSST…KGNGFLQPSP (212 aa)). Positions 854, 940, and 953 each coordinate Mg(2+). The active-site For nuclease activity is aspartate 953.

It belongs to the helicase family. UvrD subfamily. As to quaternary structure, heterotrimer of RecB, RecC and RecD. All subunits contribute to DNA-binding. Interacts with RecA. Mg(2+) serves as cofactor.

The catalysed reaction is Exonucleolytic cleavage (in the presence of ATP) in either 5'- to 3'- or 3'- to 5'-direction to yield 5'-phosphooligonucleotides.. It carries out the reaction Couples ATP hydrolysis with the unwinding of duplex DNA by translocating in the 3'-5' direction.. The enzyme catalyses ATP + H2O = ADP + phosphate + H(+). In terms of biological role, a helicase/nuclease that prepares dsDNA breaks (DSB) for recombinational DNA repair. Binds to DSBs and unwinds DNA via a highly rapid and processive ATP-dependent bidirectional helicase activity. Unwinds dsDNA until it encounters a Chi (crossover hotspot instigator) sequence from the 3' direction. Cuts ssDNA a few nucleotides 3' to the Chi site. The properties and activities of the enzyme are changed at Chi. The Chi-altered holoenzyme produces a long 3'-ssDNA overhang and facilitates RecA-binding to the ssDNA for homologous DNA recombination and repair. Holoenzyme degrades any linearized DNA that is unable to undergo homologous recombination. In the holoenzyme this subunit contributes ATPase, 3'-5' helicase, exonuclease activity and loads RecA onto ssDNA. The protein is RecBCD enzyme subunit RecB of Chlamydia muridarum (strain MoPn / Nigg).